The following is a 1084-amino-acid chain: MPRRQDVEKVLVIGSGPIVIGQAAEFDYAGTQACQALREEGLRVVLINSNPATIMTDRHVADRVYIEPITPEFVERVIARERPQGLLPTLGGQVGLNMAMQLEEAGVLARYGVRLLGTPLTAIRRAEDRAEFRALMKEIGEPVPESAIVTTPEEALAFGEEVGYPLIVRPAYTLGGTGGGIAHDREEMRDIVTRGLKLSPVTQCLVERSLLGWKEIEYEVMRDGAGNAITICSMENIDPVGVHTGDSIVVAPSQTLTDREHQILRSAALKIIDALGIEGGCNVQFALNPHAREYMVIEVNPRVSRSSALASKATGYPIAKVAAKIAVGLRLDEIRNPVTGTTYAAFEPALDYCVIKIPRFPFDKFTTADRTLGTQMKATGEVMAIDRTFPGALLKAVRSLETGRDGLFHPAVQALDDQALRERLRTPNDERLWAVAEALRRGVTVPEIHALSAIDPFFLDGIAAIVAMERELADGPLTAERMRRAKQLGFSDAAIGRIVGMDPLAVRRLRLEMGVRPVFKMVDSCAGEFPAATPYYYSCYDEENEAVSPPGRKAVVLGSGPIRIGQGIEFDYSAVHAAWELKAEGIQSIVINNNPETVSTDFDTSDRLYFEPLTLEDVLNVVEQEGDIEGVICQFGGQTAINLAVPLSRAGVRVLGTDIDQMDRAEDRRRFDQLLSDLSIPRPPGGTATSVEEAVAVARRIGYPVLVRPSFVLGGRAMEIVHDEAELRAYMREAIAVSSDRPVLVDRYFLGKEVEVDCVSDGEQVIIAGIMEHLERAGVHSGDSIAVYPTVTLTHRQRETIVAYSTRLALALQVKGLVNIQYVIHGGEIYVIEVNPRSSRTVPFLTKVTGLELAKVATQVIAGHTLAELGYDPDRSGAALVFRTPAGAGWLWPEPAERVAVKAPVFSWQKLTQVDTALSPEMKSTGEVLGVDADLPRALYKALLASGVRVPHRGTVLFTVADRDKAEAMGLARQFSDLGYRIVATTGTARALQACAIPAERVNKVSEGAPAIPDLIRAGKIDLVINTLTRGRDAHRDGFIIRRTAVEHGVPTLTSLDTARAVLTVLSSLREGEEVGISAVQDWV.

Residues methionine 1–glutamate 401 form a carboxyphosphate synthetic domain region. ATP is bound by residues arginine 129, arginine 169, glycine 175, glycine 176, arginine 208, leucine 210, glutamate 215, glycine 241, valine 242, histidine 243, glutamine 284, and glutamate 298. The ATP-grasp 1 domain occupies arginine 133–valine 327. Glutamine 284, glutamate 298, and asparagine 300 together coordinate Mg(2+). 3 residues coordinate Mn(2+): glutamine 284, glutamate 298, and asparagine 300. An oligomerization domain region spans residues threonine 402–alanine 546. A carbamoyl phosphate synthetic domain region spans residues valine 547–glycine 947. One can recognise an ATP-grasp 2 domain in the interval aspartate 672–alanine 862. ATP contacts are provided by arginine 708, arginine 747, glutamate 753, glycine 778, valine 779, histidine 780, serine 781, glutamine 821, and glutamate 833. Residues glutamine 821, glutamate 833, and asparagine 835 each contribute to the Mg(2+) site. Mn(2+) is bound by residues glutamine 821, glutamate 833, and asparagine 835. The region spanning valine 948 to valine 1084 is the MGS-like domain. Residues valine 948–valine 1084 are allosteric domain.

Belongs to the CarB family. In terms of assembly, composed of two chains; the small (or glutamine) chain promotes the hydrolysis of glutamine to ammonia, which is used by the large (or ammonia) chain to synthesize carbamoyl phosphate. Tetramer of heterodimers (alpha,beta)4. Mg(2+) is required as a cofactor. It depends on Mn(2+) as a cofactor.

It catalyses the reaction hydrogencarbonate + L-glutamine + 2 ATP + H2O = carbamoyl phosphate + L-glutamate + 2 ADP + phosphate + 2 H(+). It carries out the reaction hydrogencarbonate + NH4(+) + 2 ATP = carbamoyl phosphate + 2 ADP + phosphate + 2 H(+). The protein operates within amino-acid biosynthesis; L-arginine biosynthesis; carbamoyl phosphate from bicarbonate: step 1/1. It functions in the pathway pyrimidine metabolism; UMP biosynthesis via de novo pathway; (S)-dihydroorotate from bicarbonate: step 1/3. Functionally, large subunit of the glutamine-dependent carbamoyl phosphate synthetase (CPSase). CPSase catalyzes the formation of carbamoyl phosphate from the ammonia moiety of glutamine, carbonate, and phosphate donated by ATP, constituting the first step of 2 biosynthetic pathways, one leading to arginine and/or urea and the other to pyrimidine nucleotides. The large subunit (synthetase) binds the substrates ammonia (free or transferred from glutamine from the small subunit), hydrogencarbonate and ATP and carries out an ATP-coupled ligase reaction, activating hydrogencarbonate by forming carboxy phosphate which reacts with ammonia to form carbamoyl phosphate. This is Carbamoyl phosphate synthase large chain from Symbiobacterium thermophilum (strain DSM 24528 / JCM 14929 / IAM 14863 / T).